We begin with the raw amino-acid sequence, 1551 residues long: Envelopment polyprotein (1551 aa).

The signal sequence occupies residues Met-1–Thr-17. Residues Thr-18–Ala-546 are Lumenal-facing. The interval Gly-24–Thr-66 is disordered. Asn-25 and Asn-30 each carry an N-linked (GlcNAc...) asparagine; by host glycan. A compositionally biased stretch (low complexity) spans Ser-31 to Thr-66. Asn-80, Asn-142, and Asn-413 each carry an N-linked (GlcNAc...) asparagine; by host glycan. Residues Leu-547–Leu-567 form a helical membrane-spanning segment. Topologically, residues Tyr-568–Thr-675 are cytoplasmic. A helical transmembrane segment spans residues Thr-676–Pro-696. The Lumenal segment spans residues Thr-697 to Gln-704. A helical transmembrane segment spans residues Asp-705 to Leu-725. At Lys-726 to Gln-823 the chain is on the cytoplasmic side. Residues Leu-824 to Leu-844 form a helical membrane-spanning segment. Residues Thr-845–Ser-1451 lie on the Lumenal side of the membrane. N-linked (GlcNAc...) asparagine; by host glycosylation is found at Asn-848, Asn-1201, Asn-1258, and Asn-1420. Cys-1023 and Cys-1216 are joined by a disulfide. The helical transmembrane segment at Ile-1452–Tyr-1472 threads the bilayer. The Cytoplasmic portion of the chain corresponds to Gly-1473 to Ala-1551.

This sequence belongs to the nairovirus envelope glycoprotein family. Heterodimer with glycoprotein C; in prefusion state. As to quaternary structure, heterodimer with glycoprotein N; in prefusion state. Homotrimeric; in postfusion state. Post-translationally, specific enzymatic cleavage by host MBTPS1/S1P/SKI-1 endopeptidase yield glycoprotein N. Specific enzymatic cleavages by host furin-like protease and MBTPS1/S1P endopeptidase yield GP38. In terms of processing, glycosylated.

The protein resides in the host endoplasmic reticulum membrane. The protein localises to the virion membrane. It is found in the host Golgi apparatus membrane. In terms of biological role, glycoprotein N and glycoprotein C interact with each other and are present at the surface of the virion. Glycoprotein N probably locks the Gn-Gc complex in a prefusion state. Glycoprotein N and glycoprotein C are able to attach the virion to host cell receptors. This attachment induces virion internalization predominantly through clathrin-dependent endocytosis. Functionally, glycoprotein C and glycoprotein N interact with each other and are present at the surface of the virion. The spikes at the surface of the virion are formed by an N-terminal extension of glycoprotein C. Glycoprotein N and glycoprotein C are able to attach the virion to host cell receptors. This attachment induces virion internalization predominantly through clathrin-dependent endocytosis. Class II fusion protein that promotes fusion of viral membrane with host endosomal membrane after endocytosis of the virion. Exposure to potassium is necessary for the conformational change leading to fusion. The chain is Envelopment polyprotein (GP) from Amblyomma variegatum (Tropical bont tick).